The following is a 623-amino-acid chain: Chaperone protein DnaK (623 aa).

At T175 the chain carries Phosphothreonine; by autocatalysis. The disordered stretch occupies residues 580–623; sequence PEGAQGAGFDPNNMGGANAGNASAGNDKKDDNVVDADFKVEDDK. Positions 591-604 are enriched in low complexity; that stretch reads NNMGGANAGNASAG. Positions 605-623 are enriched in basic and acidic residues; that stretch reads NDKKDDNVVDADFKVEDDK.

It belongs to the heat shock protein 70 family.

Acts as a chaperone. The polypeptide is Chaperone protein DnaK (Clostridium botulinum (strain Hall / ATCC 3502 / NCTC 13319 / Type A)).